Here is a 241-residue protein sequence, read N- to C-terminus: Probable transcriptional regulatory protein AZOSEA20720 (241 aa).

The interval 1–21 is disordered; it reads MAGHSKWANIQHRKGRQDAKR.

This sequence belongs to the TACO1 family.

The protein resides in the cytoplasm. In Aromatoleum aromaticum (strain DSM 19018 / LMG 30748 / EbN1) (Azoarcus sp. (strain EbN1)), this protein is Probable transcriptional regulatory protein AZOSEA20720.